A 183-amino-acid polypeptide reads, in one-letter code: dCTP deaminase, dUMP-forming (183 aa).

DCTP is bound by residues 99 to 104 (KSSIAR), aspartate 117, 125 to 127 (TLE), glutamine 146, tyrosine 159, lysine 166, and glutamine 170. The active-site Proton donor/acceptor is glutamate 127.

The protein belongs to the dCTP deaminase family. As to quaternary structure, homotrimer.

It carries out the reaction dCTP + 2 H2O = dUMP + NH4(+) + diphosphate. Its pathway is pyrimidine metabolism; dUMP biosynthesis; dUMP from dCTP: step 1/1. In terms of biological role, bifunctional enzyme that catalyzes both the deamination of dCTP to dUTP and the hydrolysis of dUTP to dUMP without releasing the toxic dUTP intermediate. In Methanoregula boonei (strain DSM 21154 / JCM 14090 / 6A8), this protein is dCTP deaminase, dUMP-forming.